The sequence spans 356 residues: Tyrosine recombinase XerS (356 aa).

One can recognise a Core-binding (CB) domain in the interval 16–121 (IMPWYVLDYY…ALSSLYKYLT (106 aa)). One can recognise a Tyr recombinase domain in the interval 169–354 (AFLDYVDKEY…VNDEQKNALD (186 aa)). Catalysis depends on residues Arg210, Lys234, His306, Arg309, and His332. Residue Tyr341 is the O-(3'-phospho-DNA)-tyrosine intermediate of the active site.

This sequence belongs to the 'phage' integrase family. XerS subfamily.

It is found in the cytoplasm. Its activity is regulated as follows. FtsK is required for recombination. In terms of biological role, site-specific tyrosine recombinase, which acts by catalyzing the cutting and rejoining of the recombining DNA molecules. Essential to convert dimers of the bacterial chromosome into monomers to permit their segregation at cell division. The chain is Tyrosine recombinase XerS from Streptococcus pyogenes serotype M49 (strain NZ131).